Reading from the N-terminus, the 555-residue chain is Cytochrome P450 monooxygenase abl2 (555 aa).

A run of 2 helical transmembrane segments spans residues 38–58 and 141–161; these read SFDLFSKLAGLALLSFAALFI and VFIGAVAKVGGAVGISMAPLA. Residues asparagine 325 and asparagine 360 are each glycosylated (N-linked (GlcNAc...) asparagine). Heme is bound at residue cysteine 489.

The protein belongs to the cytochrome P450 family. Heme serves as cofactor.

The protein resides in the membrane. It functions in the pathway hormone biosynthesis. Functionally, cytochrome P450 monooxygenase; part of the gene cluster that mediates the biosynthesis of abscisic acid (ABA), a phytohormone that acts antagonistically toward salicylic acid (SA), jasmonic acid (JA) and ethylene (ETH) signaling, to impede plant defense responses. The first step of the pathway catalyzes the reaction from farnesyl diphosphate to alpha-ionylideneethane performed by the alpha-ionylideneethane synthase abl3 via a three-step reaction mechanism involving 2 neutral intermediates, beta-farnesene and allofarnesene. The cytochrome P450 monooxygenase abl1 might then be involved in the conversion of alpha-ionylideneethane to alpha-ionylideneacetic acid. Alpha-ionylideneacetic acid is further converted to abscisic acid in 2 steps involving the cytochrome P450 monooxygenase abl2 and the short-chain dehydrogenase/reductase abl4, via the intermediates 1'-deoxy-ABA or 1',4'-trans-diol-ABA, depending on the order of action of these 2 enzymes. Abl2 is responsible for the hydroxylation of carbon atom C-1' and abl4 might be involved in the oxidation of the C-4' carbon atom. This chain is Cytochrome P450 monooxygenase abl2, found in Leptosphaeria maculans (strain JN3 / isolate v23.1.3 / race Av1-4-5-6-7-8) (Blackleg fungus).